We begin with the raw amino-acid sequence, 379 residues long: UDP-4-amino-4-deoxy-L-arabinose--oxoglutarate aminotransferase (379 aa).

Lysine 182 is subject to N6-(pyridoxal phosphate)lysine.

This sequence belongs to the DegT/DnrJ/EryC1 family. ArnB subfamily. In terms of assembly, homodimer. The cofactor is pyridoxal 5'-phosphate.

It carries out the reaction UDP-4-amino-4-deoxy-beta-L-arabinose + 2-oxoglutarate = UDP-beta-L-threo-pentopyranos-4-ulose + L-glutamate. Its pathway is nucleotide-sugar biosynthesis; UDP-4-deoxy-4-formamido-beta-L-arabinose biosynthesis; UDP-4-deoxy-4-formamido-beta-L-arabinose from UDP-alpha-D-glucuronate: step 2/3. It participates in bacterial outer membrane biogenesis; lipopolysaccharide biosynthesis. Its function is as follows. Catalyzes the conversion of UDP-4-keto-arabinose (UDP-Ara4O) to UDP-4-amino-4-deoxy-L-arabinose (UDP-L-Ara4N). The modified arabinose is attached to lipid A and is required for resistance to polymyxin and cationic antimicrobial peptides. The chain is UDP-4-amino-4-deoxy-L-arabinose--oxoglutarate aminotransferase from Shigella sonnei (strain Ss046).